Reading from the N-terminus, the 387-residue chain is Anhydro-N-acetylmuramic acid kinase (387 aa).

9–16 (GTSVDGID) serves as a coordination point for ATP.

It belongs to the anhydro-N-acetylmuramic acid kinase family.

It catalyses the reaction 1,6-anhydro-N-acetyl-beta-muramate + ATP + H2O = N-acetyl-D-muramate 6-phosphate + ADP + H(+). It participates in amino-sugar metabolism; 1,6-anhydro-N-acetylmuramate degradation. Its pathway is cell wall biogenesis; peptidoglycan recycling. Its function is as follows. Catalyzes the specific phosphorylation of 1,6-anhydro-N-acetylmuramic acid (anhMurNAc) with the simultaneous cleavage of the 1,6-anhydro ring, generating MurNAc-6-P. Is required for the utilization of anhMurNAc either imported from the medium or derived from its own cell wall murein, and thus plays a role in cell wall recycling. The protein is Anhydro-N-acetylmuramic acid kinase of Synechocystis sp. (strain ATCC 27184 / PCC 6803 / Kazusa).